The chain runs to 279 residues: Tryptophan synthase alpha chain (279 aa).

Residues Glu-50 and Asp-61 each act as proton acceptor in the active site.

It belongs to the TrpA family. As to quaternary structure, tetramer of two alpha and two beta chains.

It carries out the reaction (1S,2R)-1-C-(indol-3-yl)glycerol 3-phosphate + L-serine = D-glyceraldehyde 3-phosphate + L-tryptophan + H2O. The protein operates within amino-acid biosynthesis; L-tryptophan biosynthesis; L-tryptophan from chorismate: step 5/5. In terms of biological role, the alpha subunit is responsible for the aldol cleavage of indoleglycerol phosphate to indole and glyceraldehyde 3-phosphate. This chain is Tryptophan synthase alpha chain, found in Allorhizobium ampelinum (strain ATCC BAA-846 / DSM 112012 / S4) (Agrobacterium vitis (strain S4)).